The following is a 278-amino-acid chain: MQICQSIHSDHARQLDTAGLRREFLIENIFVSDEYTMTYSHIDRIIVGGILPVEKTVSIGDEVGKQLGVSYFLERRELGVINIGGPGLITVDGQVYEIGNQEALYVGKGAKEVTFNSLESSKPAKFYYNSAPAHTTYPNKKITLAEAAPQTLGDDATSNRRTINKYIVPDVLPTCQLTMGLTKLAPGNLWNTMPCHTHDRRMEVYFYFDMDEETAVFHMMGQAQETRHLLVHNEQAVISPSWSIHSGVGTKRYTFIWGMVGENQVFGDMDHIAVSELR.

Zn(2+) contacts are provided by histidine 196, histidine 198, glutamate 203, and histidine 245.

It belongs to the KduI family. The cofactor is Zn(2+).

The catalysed reaction is 5-dehydro-4-deoxy-D-glucuronate = 3-deoxy-D-glycero-2,5-hexodiulosonate. Its pathway is glycan metabolism; pectin degradation; 2-dehydro-3-deoxy-D-gluconate from pectin: step 4/5. In terms of biological role, catalyzes the isomerization of 5-dehydro-4-deoxy-D-glucuronate to 3-deoxy-D-glycero-2,5-hexodiulosonate. The polypeptide is 4-deoxy-L-threo-5-hexosulose-uronate ketol-isomerase (Yersinia enterocolitica serotype O:8 / biotype 1B (strain NCTC 13174 / 8081)).